Reading from the N-terminus, the 127-residue chain is PanD regulatory factor (127 aa).

In terms of domain architecture, N-acetyltransferase spans 1–127 (MKLTILRLEH…TAQHDGWEKR (127 aa)). Residues 66–68 (LRV) and 72–79 (TRRRGVGQ) each bind CoA.

This sequence belongs to the PanZ/PanM family. In terms of assembly, interacts with PanD in the presence of CoA. Monomer.

Functionally, controls both the activation and catalytic activity of PanD in a coenzyme A (CoA)-dependent fashion. Binding of CoA or a derivative to PanM leads to interaction with PanD, which promotes the processing and activation of pro-PanD, and subsequent substrate-mediated inhibition of the active form of PanD. Lacks acetyltransferase activity. The protein is PanD regulatory factor of Salmonella typhimurium (strain LT2 / SGSC1412 / ATCC 700720).